A 338-amino-acid polypeptide reads, in one-letter code: Mugineic-acid 3-dioxygenase (338 aa).

The Fe2OG dioxygenase domain occupies 180–283 (DISGGRVVVD…RLSVASFIVP (104 aa)). Residues histidine 208, aspartate 210, and histidine 264 each contribute to the Fe cation site. 2-oxoglutarate is bound at residue arginine 274.

Belongs to the iron/ascorbate-dependent oxidoreductase family. Fe(2+) serves as cofactor. The cofactor is L-ascorbate. In terms of tissue distribution, expressed in roots, but not in leaves.

The enzyme catalyses mugineate + 2-oxoglutarate + O2 = 3-epihydroxymugineate + succinate + CO2 + H(+). It carries out the reaction 2'-deoxymugineate + 2-oxoglutarate + O2 = 3-epihydroxy-2'-deoxymugineate + succinate + CO2 + H(+). Involved in the biosynthesis of mugineic acid family of phytosiderophores. Hydroxylates the C-3 positions of mugineic acid (MA) and 2'-deoxymugineic acid (DMA). May be involved in boron tolerance. In Hordeum vulgare (Barley), this protein is Mugineic-acid 3-dioxygenase (IDS2).